Reading from the N-terminus, the 225-residue chain is ATP-dependent Clp protease proteolytic subunit (225 aa).

Ser-123 functions as the Nucleophile in the catalytic mechanism. His-148 is an active-site residue.

This sequence belongs to the peptidase S14 family. Fourteen ClpP subunits assemble into 2 heptameric rings which stack back to back to give a disk-like structure with a central cavity, resembling the structure of eukaryotic proteasomes.

It localises to the cytoplasm. It catalyses the reaction Hydrolysis of proteins to small peptides in the presence of ATP and magnesium. alpha-casein is the usual test substrate. In the absence of ATP, only oligopeptides shorter than five residues are hydrolyzed (such as succinyl-Leu-Tyr-|-NHMec, and Leu-Tyr-Leu-|-Tyr-Trp, in which cleavage of the -Tyr-|-Leu- and -Tyr-|-Trp bonds also occurs).. Its function is as follows. Cleaves peptides in various proteins in a process that requires ATP hydrolysis. Has a chymotrypsin-like activity. Plays a major role in the degradation of misfolded proteins. The protein is ATP-dependent Clp protease proteolytic subunit of Chlorobium chlorochromatii (strain CaD3).